A 73-amino-acid chain; its full sequence is Probable cytochrome b-c1 complex subunit 8 (73 aa).

Topologically, residues 1–42 (MGQASKVFGKQITYSVSPFQQKLFVNYFKNAIPHLRRGVKDN) are mitochondrial matrix. Residues 43-60 (FFCSVPYFAALYITVNWA) traverse the membrane as a helical segment. The Mitochondrial intermembrane segment spans residues 61–73 (NETYHNEMKDHWY).

The protein belongs to the UQCRQ/QCR8 family. As to quaternary structure, component of the ubiquinol-cytochrome c oxidoreductase (cytochrome b-c1 complex, complex III, CIII), a multisubunit enzyme composed of 3 respiratory subunits cytochrome b, cytochrome c1 and Rieske protein, 2 core protein subunits, and additional low-molecular weight protein subunits. The complex exists as an obligatory dimer and forms supercomplexes (SCs) in the inner mitochondrial membrane with cytochrome c oxidase (complex IV, CIV).

The protein localises to the mitochondrion inner membrane. Its function is as follows. Component of the ubiquinol-cytochrome c oxidoreductase, a multisubunit transmembrane complex that is part of the mitochondrial electron transport chain which drives oxidative phosphorylation. The respiratory chain contains 3 multisubunit complexes succinate dehydrogenase (complex II, CII), ubiquinol-cytochrome c oxidoreductase (cytochrome b-c1 complex, complex III, CIII) and cytochrome c oxidase (complex IV, CIV), that cooperate to transfer electrons derived from NADH and succinate to molecular oxygen, creating an electrochemical gradient over the inner membrane that drives transmembrane transport and the ATP synthase. The cytochrome b-c1 complex catalyzes electron transfer from ubiquinol to cytochrome c, linking this redox reaction to translocation of protons across the mitochondrial inner membrane, with protons being carried across the membrane as hydrogens on the quinol. In the process called Q cycle, 2 protons are consumed from the matrix, 4 protons are released into the intermembrane space and 2 electrons are passed to cytochrome c. The chain is Probable cytochrome b-c1 complex subunit 8 from Dictyostelium discoideum (Social amoeba).